The following is a 403-amino-acid chain: Phosphoglycerate kinase (403 aa).

Residues 21 to 23 (DFN), Arg36, 59 to 62 (HLGR), Arg119, and Arg154 contribute to the substrate site. ATP is bound by residues Lys207, Gly299, Glu330, and 357–360 (GGDA).

This sequence belongs to the phosphoglycerate kinase family. Monomer.

Its subcellular location is the cytoplasm. It carries out the reaction (2R)-3-phosphoglycerate + ATP = (2R)-3-phospho-glyceroyl phosphate + ADP. Its pathway is carbohydrate degradation; glycolysis; pyruvate from D-glyceraldehyde 3-phosphate: step 2/5. This Chlamydia abortus (strain DSM 27085 / S26/3) (Chlamydophila abortus) protein is Phosphoglycerate kinase.